We begin with the raw amino-acid sequence, 302 residues long: MENTQRPSFDCEIRAKYRWFMTDSYVAAARLGSPARRTPRTRRYAMTPPAFFAVAYAINPWMDVTAPVDVQVAQAQWEHLHQTYLRLGHSVDLIEPISGLPDMVYTANGGFIAHDIAVVARFRFPERAGESRAYASWMSSVGYRPVTTRHVNEGQGDLLMVGERVLAGYGFRTDQRAHAEIAAVLGLPVVSLELVDPRFYHLDTALAVLDDHTIAYYPPAFSTAAQEQLSALFPDAIVVGSADAFVFGLNAVSDGLNVVLPVAAMGFAAQLRAAGFEPVGVDLSELLKGGGSVKCCTLEIHP.

The substrate site is built by Asp102, Arg127, and Arg172. Catalysis depends on His201, which acts as the Proton donor. Cys295 serves as the catalytic Nucleophile.

Belongs to the DDAH family.

It carries out the reaction N(omega),N(omega)-dimethyl-L-arginine + H2O = dimethylamine + L-citrulline. The enzyme catalyses N(omega)-methyl-L-arginine + H2O = L-citrulline + methylamine. In terms of biological role, hydrolyzes N(G),N(G)-dimethyl-L-arginine (ADMA) and N(G)-monomethyl-L-arginine (MMA). This Mycobacterium tuberculosis (strain ATCC 25618 / H37Rv) protein is N(G),N(G)-dimethylarginine dimethylaminohydrolase.